The chain runs to 168 residues: Photosystem I assembly protein Ycf3 (168 aa).

3 TPR repeats span residues 35–68 (AFTYYRDGMSAQSEGNYAEALQNYYEAMRLEIDP), 72–105 (SYILYNIGLIHTSNGEHTKALEYYFRALERNPFL), and 120–153 (GEQAIRQGDSEVAESWFNQAAEYWKQAIALTPGN).

It belongs to the Ycf3 family.

It localises to the plastid. Its subcellular location is the chloroplast thylakoid membrane. Essential for the assembly of the photosystem I (PSI) complex. May act as a chaperone-like factor to guide the assembly of the PSI subunits. The protein is Photosystem I assembly protein Ycf3 of Phaseolus vulgaris (Kidney bean).